The chain runs to 469 residues: Aspartyl/glutamyl-tRNA(Asn/Gln) amidotransferase subunit B (469 aa).

It belongs to the GatB/GatE family. GatB subfamily. As to quaternary structure, heterotrimer of A, B and C subunits.

It catalyses the reaction L-glutamyl-tRNA(Gln) + L-glutamine + ATP + H2O = L-glutaminyl-tRNA(Gln) + L-glutamate + ADP + phosphate + H(+). The catalysed reaction is L-aspartyl-tRNA(Asn) + L-glutamine + ATP + H2O = L-asparaginyl-tRNA(Asn) + L-glutamate + ADP + phosphate + 2 H(+). Allows the formation of correctly charged Asn-tRNA(Asn) or Gln-tRNA(Gln) through the transamidation of misacylated Asp-tRNA(Asn) or Glu-tRNA(Gln) in organisms which lack either or both of asparaginyl-tRNA or glutaminyl-tRNA synthetases. The reaction takes place in the presence of glutamine and ATP through an activated phospho-Asp-tRNA(Asn) or phospho-Glu-tRNA(Gln). The polypeptide is Aspartyl/glutamyl-tRNA(Asn/Gln) amidotransferase subunit B (Methanococcus maripaludis (strain C6 / ATCC BAA-1332)).